A 784-amino-acid polypeptide reads, in one-letter code: MPHTLWMVWVLGVIISLSKEESSNQASLSCDRNGICKGSSGSLNSIPSGLTEAVKSLDLSNNRITYISNSDLQRCVNLQALVLTSNGINTIEEDSFSSLGSLEHLDLSYNYLSNLSSSWFKPLSSLTFLNLLGNPYKTLGETSLFSHLTKLQILRVGNMDTFTKIQRKDFAGLTFLEELEIDASDLQSYEPKSLKSIQNVSHLILHMKQHILLLEIFVDVTSSVECLELRDTDLDTFHFSELSTGETNSLIKKFTFRNVKITDESLFQVMKLLNQISGLLELEFDDCTLNGVGNFRASDNDRVIDPGKVETLTIRRLHIPRFYLFYDLSTLYSLTERVKRITVENSKVFLVPCLLSQHLKSLEYLDLSENLMVEEYLKNSACEDAWPSLQTLILRQNHLASLEKTGETLLTLKNLTNVDISKNSFHSMPETCQWPEKMKYLNLSSTRIHSVTGCIPKTLEILDVSNNNLNLFSLNLPQLKELYISRNKLMTLPDASLLPMLLVLKISRNAITTFSKEQLDSFHTLKTLEAGGNNFICSCEFLSFTQEQQALAKVLIDWPANYLCDSPSHVRGQQVQDVRLSVSECHRTALVSGMCCALFLLILLTGVLCHRFHGLWYMKMMWAWLQAKRKPRKAPSRNICYDAFVSYSERDAYWVENLMVQELENFNPPFKLCLHKRDFIPGKWIIDNIIDSIEKSHKTVFVLSENFVKSEWCKYELDFSHFRLFDENNDAAILILLEPIEKKAIPQRFCKLRKIMNTKTYLEWPMDEAQREGFWVNLRAAIKS.

Residues 1-20 (MPHTLWMVWVLGVIISLSKE) form the signal peptide. At 21-587 (ESSNQASLSC…VRLSVSECHR (567 aa)) the chain is on the extracellular side. The cysteines at positions 30 and 36 are disulfide-linked. LRR repeat units lie at residues 54–77 (VKSLDLSNNRITYISNSDLQRCVN), 78–101 (LQALVLTSNGINTIEEDSFSSLGS), 102–125 (LEHLDLSYNYLSNLSSSWFKPLSS), 126–150 (LTFLNLLGNPYKTLGETSLFSHLTK), 151–175 (LQILRVGNMDTFTKIQRKDFAGLTF), 176–199 (LEELEIDASDLQSYEPKSLKSIQN), 200–223 (VSHLILHMKQHILLLEIFVDVTSS), 224–250 (VECLELRDTDLDTFHFSELSTGETNSL), 251–278 (IKKFTFRNVKITDESLFQVMKLLNQISG), 279–308 (LLELEFDDCTLNGVGNFRASDNDRVIDPGK), 309–337 (VETLTIRRLHIPRFYLFYDLSTLYSLTER), 338–361 (VKRITVENSKVFLVPCLLSQHLKS), 362–388 (LEYLDLSENLMVEEYLKNSACEDAWPS), 389–414 (LQTLILRQNHLASLEKTGETLLTLKN), 415–437 (LTNVDISKNSFHSMPETCQWPEK), 438–457 (MKYLNLSSTRIHSVTGCIPK), 458–478 (TLEILDVSNNNLNLFSLNLPQ), 479–500 (LKELYISRNKLMTLPDASLLPM), and 501–524 (LLVLKISRNAITTFSKEQLDSFHT). An N-linked (GlcNAc...) asparagine glycan is attached at Asn114. N-linked (GlcNAc...) asparagine glycosylation is present at Asn199. Cys353 and Cys382 form a disulfide bridge. Asn414 carries N-linked (GlcNAc...) asparagine glycosylation. The cysteines at positions 432 and 454 are disulfide-linked. A glycan (N-linked (GlcNAc...) asparagine) is linked at Asn442. Residues 525 to 579 (LKTLEAGGNNFICSCEFLSFTQEQQALAKVLIDWPANYLCDSPSHVRGQQVQDVR) enclose the LRRCT domain. Residues 588–608 (TALVSGMCCALFLLILLTGVL) traverse the membrane as a helical segment. Over 609–784 (CHRFHGLWYM…WVNLRAAIKS (176 aa)) the chain is Cytoplasmic. The 144-residue stretch at 639–782 (ICYDAFVSYS…GFWVNLRAAI (144 aa)) folds into the TIR domain. Lys754 is covalently cross-linked (Glycyl lysine isopeptide (Lys-Gly) (interchain with G-Cter in ubiquitin)). An ATG16L1-binding motif motif is present at residues 761-778 (YLEWPMDEAQREGFWVNL).

It belongs to the Toll-like receptor family. Interacts with LY96, TLR1 and TLR6 (via extracellular domain). TLR2 seems to exist in heterodimers with either TLR1 or TLR6 before stimulation by the ligand. The heterodimers form bigger oligomers in response to their corresponding ligands as well as further heterotypic associations with other receptors such as CD14 and/or CD36. Binds MYD88 (via TIR domain). Interacts with TICAM1. Interacts with CNPY3. Interacts with ATG16L1. Interacts with PPP1R11. Interacts with TICAM2. Interacts with TIRAP. Post-translationally, ubiquitinated at Lys-754 by PPP1R11, leading to its degradation. Deubiquitinated by USP2. Glycosylation of Asn-442 is critical for secretion of the N-terminal ectodomain of TLR2.

It localises to the membrane. The protein resides in the cytoplasmic vesicle. It is found in the phagosome membrane. The protein localises to the membrane raft. Cooperates with LY96 to mediate the innate immune response to bacterial lipoproteins and other microbial cell wall components. Cooperates with TLR1 or TLR6 to mediate the innate immune response to bacterial lipoproteins or lipopeptides. Acts via MYD88 and TRAF6, leading to NF-kappa-B activation, cytokine secretion and the inflammatory response. May also promote apoptosis in response to lipoproteins. Forms activation clusters composed of several receptors depending on the ligand, these clusters trigger signaling from the cell surface and subsequently are targeted to the Golgi in a lipid-raft dependent pathway. Forms the cluster TLR2:TLR6:CD14:CD36 in response to diacylated lipopeptides and TLR2:TLR1:CD14 in response to triacylated lipopeptides. This chain is Toll-like receptor 2 (TLR2), found in Gorilla gorilla gorilla (Western lowland gorilla).